We begin with the raw amino-acid sequence, 84 residues long: U7-ctenitoxin-Pn1a (84 aa).

The N-terminal stretch at 1–17 (MKLCILLVVLLITVVRA) is a signal peptide. Residues 18-38 (EEDILENEAEDISPAIKERSA) constitute a propeptide that is removed on maturation. Cystine bridges form between C41–C56, C48–C61, C55–C78, and C63–C76.

Expressed by the venom gland.

The protein resides in the secreted. Antagonist of L-type calcium channels (Cav1/CACNA1). Causes paralysis in the posterior limbs and gradual decreases in movement and aggression during 24 hours at dose levels of 5 ug per mouse. The polypeptide is U7-ctenitoxin-Pn1a (Phoneutria nigriventer (Brazilian armed spider)).